The primary structure comprises 952 residues: Calsyntenin-1 (952 aa).

The N-terminal stretch at 1-28 (MLRRPAPALARAVRLLLAGLLYGGGVWA) is a signal peptide. Residues 29–830 (ARVNKHKPWL…PHPFAVVPST (802 aa)) lie on the Extracellular side of the membrane. 2 consecutive Cadherin domains span residues 38-154 (LEPT…APVF) and 155-255 (KEKS…SPGW). Asparagine 356 is a glycosylation site (N-linked (GlcNAc...) asparagine). A helical membrane pass occupies residues 831-851 (ATVVIVVCVSFLVFMIILGVF). Residues 852 to 952 (RIRAAHQRTM…LEWDYSTLSY (101 aa)) are Cytoplasmic-facing. The tract at residues 886-952 (METYEDQHSS…LEWDYSTLSY (67 aa)) is disordered. Residues 896 to 930 (EEEEEEEEEEESEDGEEEEDITSAESESSEEEEGG) show a composition bias toward acidic residues. The span at 934–952 (GQNTTRQQQLEWDYSTLSY) shows a compositional bias: polar residues.

The protein belongs to the calsyntenin family. Directly interacts with APBA2. Forms a tripartite complex with APBA2 and APP. Interacts with KLC1. As to quaternary structure, interacts with APBB1; this interaction stabilizes AlcICD metabolism. In terms of assembly, interacts with PSEN1. Proteolytically processed under normal cellular conditions. A primary zeta-cleavage generates a large extracellular (soluble) N-terminal domain (sAlc) and a short C-terminal transmembrane fragment (CTF1). A secondary cleavage catalyzed by presenilin gamma-secretase within the transmembrane domain releases the beta-Alc-alpha chain in the extracellular milieu and produces an intracellular fragment (AlcICD). This processing is strongly suppressed in the tripartite complex formed with APBA2 and APP, which seems to prevent the association with PSEN1. Preferentially expressed in the retina and brain.

The protein resides in the postsynaptic cell membrane. It localises to the endoplasmic reticulum membrane. The protein localises to the golgi apparatus membrane. Its subcellular location is the cell projection. It is found in the neuron projection. The protein resides in the nucleus. Postsynaptic adhesion molecule that binds to presynaptic neurexins to mediate both excitatory and inhibitory synapse formation. Promotes synapse development by acting as a cell adhesion molecule at the postsynaptic membrane, which associates with neurexin-alpha at the presynaptic membrane. Also functions as a cargo in axonal anterograde transport by acting as a molecular adapter that promotes KLC1 association with vesicles. Complex formation with APBA2 and APP, stabilizes APP metabolism and enhances APBA2-mediated suppression of beta-APP40 secretion, due to the retardation of intracellular APP maturation. In terms of biological role, as intracellular fragment AlcICD, suppresses APBB1-dependent transactivation stimulated by APP C-terminal intracellular fragment (AICD), most probably by competing with AICD for APBB1-binding. Functionally, in complex with APBA2 and C99, a C-terminal APP fragment, abolishes C99 interaction with PSEN1 and thus APP C99 cleavage by gamma-secretase, most probably through stabilization of the direct interaction between APBA2 and APP. In Rattus norvegicus (Rat), this protein is Calsyntenin-1 (Clstn1).